The primary structure comprises 270 residues: Glucosamine-6-phosphate deaminase (270 aa).

The active-site Proton acceptor; for enolization step is the aspartate 68. Residue aspartate 145 is the For ring-opening step of the active site. Histidine 147 acts as the Proton acceptor; for ring-opening step in catalysis. Residue glutamate 152 is the For ring-opening step of the active site.

Belongs to the glucosamine/galactosamine-6-phosphate isomerase family. NagB subfamily.

The catalysed reaction is alpha-D-glucosamine 6-phosphate + H2O = beta-D-fructose 6-phosphate + NH4(+). It functions in the pathway amino-sugar metabolism; N-acetylneuraminate degradation; D-fructose 6-phosphate from N-acetylneuraminate: step 5/5. Functionally, catalyzes the reversible isomerization-deamination of glucosamine 6-phosphate (GlcN6P) to form fructose 6-phosphate (Fru6P) and ammonium ion. The protein is Glucosamine-6-phosphate deaminase of Bifidobacterium longum (strain NCC 2705).